Reading from the N-terminus, the 526-residue chain is Glucomannan 4-beta-mannosyltransferase 1 (526 aa).

The chain crosses the membrane as a helical span at residues 31 to 51; the sequence is VIIPLLKLAVIVCSVMSIMLF. Aspartate 130 is an active-site residue. The substrate site is built by aspartate 189 and aspartate 191. Aspartate 283 is an active-site residue. The next 4 membrane-spanning stretches (helical) occupy residues 362–382, 399–419, 477–497, and 501–521; these read IVAHWVTFFFYCIVIPACVIV, ITILNAVSTPRSMHLLVLWIL, PLEIIVGMYMLHCATYDLLFG, and FFVYLLLQAGAFFTMGFGLVG.

The protein belongs to the glycosyltransferase 2 family. Plant cellulose synthase-like A subfamily.

The protein localises to the golgi apparatus membrane. The catalysed reaction is GDP-mannose + (glucomannan)n = GDP + (glucomannan)n+1.. In terms of biological role, possesses 4-beta-mannosyltransferase activity on mannan using GDP-mannose. The beta-1,4-mannan product is the backbone for galactomannan synthesis by galactomannan galactosyltransferase. The galactomannan is a hemicellulosic storage polysaccharide accumulated in the form of secondary wall thickenings in the seed endosperm. The polypeptide is Glucomannan 4-beta-mannosyltransferase 1 (Cyamopsis tetragonoloba (Guar)).